Reading from the N-terminus, the 716-residue chain is Fatty acid oxidation complex subunit alpha (716 aa).

The enoyl-CoA hydratase/isomerase stretch occupies residues 1–189; the sequence is MIYQSPTIQV…KVGAVDAVVA (189 aa). Asp296 lines the substrate pocket. A 3-hydroxyacyl-CoA dehydrogenase region spans residues 311-716; that stretch reads KEVNNAAVLG…AANNGSYYQA (406 aa). NAD(+) contacts are provided by residues Met324, Asp343, 400–402, Lys407, and Ser429; that span reads VVE. The For 3-hydroxyacyl-CoA dehydrogenase activity role is filled by His450. Position 453 (Asn453) interacts with NAD(+). Residues Asn500 and Tyr660 each coordinate substrate.

The protein in the N-terminal section; belongs to the enoyl-CoA hydratase/isomerase family. In the C-terminal section; belongs to the 3-hydroxyacyl-CoA dehydrogenase family. Heterotetramer of two alpha chains (FadB) and two beta chains (FadA).

It catalyses the reaction a (3S)-3-hydroxyacyl-CoA + NAD(+) = a 3-oxoacyl-CoA + NADH + H(+). The enzyme catalyses a (3S)-3-hydroxyacyl-CoA = a (2E)-enoyl-CoA + H2O. It carries out the reaction a 4-saturated-(3S)-3-hydroxyacyl-CoA = a (3E)-enoyl-CoA + H2O. The catalysed reaction is (3S)-3-hydroxybutanoyl-CoA = (3R)-3-hydroxybutanoyl-CoA. It catalyses the reaction a (3Z)-enoyl-CoA = a 4-saturated (2E)-enoyl-CoA. The enzyme catalyses a (3E)-enoyl-CoA = a 4-saturated (2E)-enoyl-CoA. It participates in lipid metabolism; fatty acid beta-oxidation. In terms of biological role, involved in the aerobic and anaerobic degradation of long-chain fatty acids via beta-oxidation cycle. Catalyzes the formation of 3-oxoacyl-CoA from enoyl-CoA via L-3-hydroxyacyl-CoA. It can also use D-3-hydroxyacyl-CoA and cis-3-enoyl-CoA as substrate. In Shewanella baltica (strain OS223), this protein is Fatty acid oxidation complex subunit alpha.